Here is a 448-residue protein sequence, read N- to C-terminus: Ribosomal protein uS12 methylthiotransferase RimO (448 aa).

The region spanning proline 10–proline 120 is the MTTase N-terminal domain. Cysteine 19, cysteine 55, cysteine 84, cysteine 152, cysteine 156, and cysteine 159 together coordinate [4Fe-4S] cluster. In terms of domain architecture, Radical SAM core spans leucine 138–glutamine 379. The region spanning glutamine 382 to cysteine 448 is the TRAM domain.

Belongs to the methylthiotransferase family. RimO subfamily. Requires [4Fe-4S] cluster as cofactor.

The protein localises to the cytoplasm. The enzyme catalyses L-aspartate(89)-[ribosomal protein uS12]-hydrogen + (sulfur carrier)-SH + AH2 + 2 S-adenosyl-L-methionine = 3-methylsulfanyl-L-aspartate(89)-[ribosomal protein uS12]-hydrogen + (sulfur carrier)-H + 5'-deoxyadenosine + L-methionine + A + S-adenosyl-L-homocysteine + 2 H(+). Functionally, catalyzes the methylthiolation of an aspartic acid residue of ribosomal protein uS12. This is Ribosomal protein uS12 methylthiotransferase RimO from Mannheimia succiniciproducens (strain KCTC 0769BP / MBEL55E).